A 178-amino-acid polypeptide reads, in one-letter code: Translation initiation factor IF-3 (178 aa).

The disordered stretch occupies residues 1 to 20 (MRRPFKAAAPTKDGPRSNRD).

The protein belongs to the IF-3 family. In terms of assembly, monomer.

The protein resides in the cytoplasm. IF-3 binds to the 30S ribosomal subunit and shifts the equilibrium between 70S ribosomes and their 50S and 30S subunits in favor of the free subunits, thus enhancing the availability of 30S subunits on which protein synthesis initiation begins. In Mesorhizobium japonicum (strain LMG 29417 / CECT 9101 / MAFF 303099) (Mesorhizobium loti (strain MAFF 303099)), this protein is Translation initiation factor IF-3.